A 161-amino-acid chain; its full sequence is N5-carboxyaminoimidazole ribonucleotide mutase (161 aa).

Residues Ser-9, Asp-12, and Arg-39 each contribute to the substrate site.

This sequence belongs to the AIR carboxylase family. Class I subfamily.

The enzyme catalyses 5-carboxyamino-1-(5-phospho-D-ribosyl)imidazole + H(+) = 5-amino-1-(5-phospho-D-ribosyl)imidazole-4-carboxylate. It functions in the pathway purine metabolism; IMP biosynthesis via de novo pathway; 5-amino-1-(5-phospho-D-ribosyl)imidazole-4-carboxylate from 5-amino-1-(5-phospho-D-ribosyl)imidazole (N5-CAIR route): step 2/2. Catalyzes the conversion of N5-carboxyaminoimidazole ribonucleotide (N5-CAIR) to 4-carboxy-5-aminoimidazole ribonucleotide (CAIR). The protein is N5-carboxyaminoimidazole ribonucleotide mutase of Vibrio cholerae serotype O1 (strain ATCC 39315 / El Tor Inaba N16961).